A 509-amino-acid polypeptide reads, in one-letter code: Maturase K (509 aa).

It belongs to the intron maturase 2 family. MatK subfamily.

Its subcellular location is the plastid. The protein resides in the chloroplast. In terms of biological role, usually encoded in the trnK tRNA gene intron. Probably assists in splicing its own and other chloroplast group II introns. This is Maturase K from Sequoia sempervirens (California redwood).